A 365-amino-acid chain; its full sequence is MGSTGETQMTPTQVSDEEANLFAMQLASASVLPMVLKAAIELDLLEIMAKAGPGVFLSPTDIASQLPTKNPDAPVMLDRMLRLLASYSILTYSLRTLADGKVERLYGLGPVCKFLTKNEEGVSIAPLCLMNQDKVLLESWYHLKDAVLEGGIPFNKAYGMTAFEYHGTDPRFNKVFNRGMADHSTITMKKILETYKGFEGLTSVVDVGGGTGAVLNMIVSKYPSIKGINFDLPHVIEDAPQYPGVEHVGGDMFVSVPKGDAIFMKWICHDWSDEHCLKFLKNCYAALPDNGKVILGECILPVAPDSSLATKGVVHIDVIMLAHNPGGKERTEQEFQALAKGAGFQGFNVACSAFNTYVIEFLKKN.

Residue 130–136 (MNQDKVL) participates in substrate binding. The segment at 162–180 (AFEYHGTDPRFNKVFNRGM) is substrate binding. S-adenosyl-L-methionine contacts are provided by G208, D231, D251, M252, and K265. Catalysis depends on H269, which acts as the Proton acceptor.

This sequence belongs to the class I-like SAM-binding methyltransferase superfamily. Cation-independent O-methyltransferase family. COMT subfamily. In terms of assembly, homodimer.

The enzyme catalyses (E)-caffeate + S-adenosyl-L-methionine = (E)-ferulate + S-adenosyl-L-homocysteine + H(+). The protein operates within aromatic compound metabolism; phenylpropanoid biosynthesis. Catalyzes the conversion of caffeic acid to ferulic acid and of 5-hydroxyferulic acid to sinapic acid. The resulting products may subsequently be converted to the corresponding alcohols that are incorporated into lignins. This Prunus dulcis (Almond) protein is Caffeic acid 3-O-methyltransferase (COMT1).